The chain runs to 28 residues: Somatostatin-2 (28 aa).

Cys17 and Cys28 form a disulfide bridge.

Belongs to the somatostatin family.

It is found in the secreted. Functionally, somatostatin inhibits the release of somatotropin. The polypeptide is Somatostatin-2 (sst2) (Oreochromis niloticus (Nile tilapia)).